We begin with the raw amino-acid sequence, 250 residues long: Flavin-dependent thymidylate synthase (250 aa).

The region spanning 7–233 (LRVQLIAKTE…PAVFADFEVT (227 aa)) is the ThyX domain. DUMP-binding positions include 92–95 (ELIR), 103–107 (QLSQR), and R172. Residues 95-97 (RHR) and Q103 each bind FAD. Positions 95–105 (RHRHFSYSQLS) match the ThyX motif motif. FAD contacts are provided by residues 188-190 (NYR) and H194. R199 serves as a coordination point for dUMP. The active-site Involved in ionization of N3 of dUMP, leading to its activation is the R199.

This sequence belongs to the thymidylate synthase ThyX family. Homotetramer. FAD is required as a cofactor.

It carries out the reaction dUMP + (6R)-5,10-methylene-5,6,7,8-tetrahydrofolate + NADPH + H(+) = dTMP + (6S)-5,6,7,8-tetrahydrofolate + NADP(+). Its pathway is pyrimidine metabolism; dTTP biosynthesis. Functionally, catalyzes the reductive methylation of 2'-deoxyuridine-5'-monophosphate (dUMP) to 2'-deoxythymidine-5'-monophosphate (dTMP) while utilizing 5,10-methylenetetrahydrofolate (mTHF) as the methyl donor, and NADPH and FADH(2) as the reductant. The chain is Flavin-dependent thymidylate synthase from Mycobacterium marinum (strain ATCC BAA-535 / M).